A 1390-amino-acid polypeptide reads, in one-letter code: DNA-directed RNA polymerase subunit beta' (1390 aa).

Zn(2+)-binding residues include Cys70, Cys72, Cys85, and Cys88. Residues Asp460, Asp462, and Asp464 each coordinate Mg(2+). Cys814, Cys888, Cys895, and Cys898 together coordinate Zn(2+).

It belongs to the RNA polymerase beta' chain family. The RNAP catalytic core consists of 2 alpha, 1 beta, 1 beta' and 1 omega subunit. When a sigma factor is associated with the core the holoenzyme is formed, which can initiate transcription. Requires Mg(2+) as cofactor. Zn(2+) is required as a cofactor.

The catalysed reaction is RNA(n) + a ribonucleoside 5'-triphosphate = RNA(n+1) + diphosphate. DNA-dependent RNA polymerase catalyzes the transcription of DNA into RNA using the four ribonucleoside triphosphates as substrates. In Pseudoalteromonas translucida (strain TAC 125), this protein is DNA-directed RNA polymerase subunit beta'.